Consider the following 538-residue polypeptide: Atos homolog protein B (538 aa).

The segment covering 1-18 (MRHVQAEPSPSSEPEAGP) has biased composition (low complexity). Disordered regions lie at residues 1–103 (MRHV…GLLG), 156–185 (HTRD…QLHT), and 197–308 (GGKS…PMGR). Pro residues predominate over residues 227 to 238 (HTPPGPGPPGPC). 2 positions are modified to phosphoserine: Ser254 and Ser255. Over residues 274–286 (AANSSDAKATSFW) the composition is skewed to polar residues. The segment at 348-430 (LLGNFEESLL…VPKVGTVQVT (83 aa)) is required for macropage invasion. Positions 436–444 (QTVVKMFLV) are transactivation domain 1 (TAD1).

This sequence belongs to the ATOS family.

It is found in the nucleus. In terms of biological role, transcription regulator that may syncronize transcriptional and translational programs. The polypeptide is Atos homolog protein B (Macaca fascicularis (Crab-eating macaque)).